Consider the following 1790-residue polypeptide: Intracellular protein transport protein USO1 (1790 aa).

Positions 1–724 (MDIIQGLIQQ…LSHDPDEEPI (724 aa)) are globular head. ARM repeat units lie at residues 45 to 89 (AFSR…LFIR), 127 to 170 (QFSL…AVMA), 173 to 213 (PLKA…MAVV), 215 to 260 (DSPH…NILK), 261 to 312 (YNTS…VSLT), 314 to 362 (EPGN…NMVR), 363 to 429 (SNEH…LKAY), 431 to 512 (MDNF…PFKL), 543 to 584 (GNDL…LIYW), and 586 to 630 (FGDF…LGVA). Residues 452-484 (TNNVGDNAKENGGSNKSDKESDSDKDTDGKDGT) are disordered. The tract at residues 465-487 (SNKSDKESDSDKDTDGKDGTEYE) is charged (hyper-hydrophilic). Positions 467 to 484 (KSDKESDSDKDTDGKDGT) are enriched in basic and acidic residues. Residues 725–1790 (NKISFEEVEK…EEDEEEGQVA (1066 aa)) adopt a coiled-coil conformation. Residues 991–1790 (ESSIQLSNLQ…EEDEEEGQVA (800 aa)) form a dispensable for the protein function region. Disordered stretches follow at residues 1185–1221 (EITS…SNLK), 1326–1351 (KEKS…EEQL), 1485–1547 (GLKK…EDIK), 1645–1667 (QELD…EVRK), 1722–1742 (DNLK…SEID), and 1762–1790 (LKDL…GQVA). A compositionally biased stretch (basic and acidic residues) spans 1194–1209 (ESIKKKNDELEGEVKA). 4 stretches are compositionally biased toward basic and acidic residues: residues 1485 to 1512 (GLKK…KLES), 1519 to 1547 (TELK…EDIK), 1655 to 1667 (QKSE…EVRK), and 1722 to 1738 (DNLK…NEDR). At Ser-1770 the chain carries Phosphoserine. The span at 1770 to 1790 (SSDEEDDEEDDEEDEEEGQVA) shows a compositional bias: acidic residues.

It belongs to the VDP/USO1/EDE1 family. In terms of assembly, homodimer. Dimerizes by parallel association of the tails, resulting in an elongated structure with two globular head domains side by side, and a long rod-like tail structure.

Its subcellular location is the cytoplasm. It is found in the cytoskeleton. The protein resides in the cytoplasmic vesicle membrane. It localises to the endoplasmic reticulum membrane. The protein localises to the golgi apparatus membrane. In terms of biological role, required for protein transport from the ER to the Golgi complex. The polypeptide is Intracellular protein transport protein USO1 (USO1) (Saccharomyces cerevisiae (strain ATCC 204508 / S288c) (Baker's yeast)).